The sequence spans 367 residues: C-C chemokine receptor type 6 (367 aa).

At 1–39 (MNSTESYFGTDDYDNTEYYSIPPDHGPCSLEEVRNFTKV) the chain is on the extracellular side. 2 N-linked (GlcNAc...) asparagine glycosylation sites follow: Asn-2 and Asn-35. A helical transmembrane segment spans residues 40–66 (FVPIAYSLICVFGLLGNIMVVMTFAFY). Over 67-75 (KKARSMTDV) the chain is Cytoplasmic. The chain crosses the membrane as a helical span at residues 76 to 96 (YLLNMAITDILFVLTLPFWAV). The Extracellular portion of the chain corresponds to 97–111 (THATNTWVFSDALCK). Cys-110 and Cys-189 form a disulfide bridge. The chain crosses the membrane as a helical span at residues 112 to 133 (LMKGTYAVNFNCGMLLLACISM). The Cytoplasmic portion of the chain corresponds to 134-151 (DRYIAIVQATKSFRVRSR). The chain crosses the membrane as a helical span at residues 152–172 (TLTHSKVICVAVWFISIIISS). Residues 173 to 203 (PTFIFNKKYELQDRDVCEPRYRSVSEPITWK) are Extracellular-facing. A helical membrane pass occupies residues 204–230 (LLGMGLELFFGFFTPLLFMVFCYLFII). The Cytoplasmic portion of the chain corresponds to 231 to 246 (KTLVQAQNSKRHRAIR). A helical transmembrane segment spans residues 247-271 (VVIAVVLVFLACQIPHNMVLLVTAV). The Extracellular portion of the chain corresponds to 272 to 295 (NTGKVGRSCSTEKVLAYTRNVAEV). A helical membrane pass occupies residues 296–313 (LAFLHCCLNPVLYAFIGQ). Topologically, residues 314-367 (KFRNYFMKIMKDVWCMRRKNKMPGFLCARVYSESYISRQTSETVENDNASSFTM) are cytoplasmic.

It belongs to the G-protein coupled receptor 1 family. In terms of tissue distribution, sperm. Mainly localized in the principal piece and neck region of the tail but is also found in the acrosomal region in a small percentage of sperm cells. Expressed in natural regulatory T cells (nTregs) and a subset of early thymocyte progenitor double-negative 1 (DN1) cells. Expressed in memory B cells. Expressed by IL17 producing helper T-cells (Th17), type 1 effector cells (Th1), type 2 effector cells (Th2) and regulatory T-cells (Treg) (at protein level). Expressed by Th17 cells in spleen, Peyers patches, and lamina propria of small and large intestine. Highly expressed in testis, lung, colon, and dendritic cells.

It localises to the cell membrane. The protein resides in the cell surface. In terms of biological role, receptor for the C-C type chemokine CCL20. Binds to CCL20 and subsequently transduces a signal by increasing the intracellular calcium ion levels. Although CCL20 is its major ligand it can also act as a receptor for non-chemokine ligands such as beta-defensins. Binds to defensin DEFB1 leading to increase in intracellular calcium ions and cAMP levels. Its binding to DEFB1 is essential for the function of DEFB1 in regulating sperm motility and bactericidal activity. Binds to defensins DEFB4 and DEFB4A/B and mediates their chemotactic effects. The ligand-receptor pair CCL20-CCR6 is responsible for the chemotaxis of dendritic cells (DC), effector/memory T-cells and B-cells and plays an important role at skin and mucosal surfaces under homeostatic and inflammatory conditions, as well as in pathology, including cancer and various autoimmune diseases. CCR6-mediated signals are essential for immune responses to microbes in the intestinal mucosa and in the modulation of inflammatory responses initiated by tissue insult and trauma. CCR6 is essential for the recruitment of both the pro-inflammatory IL17 producing helper T-cells (Th17) and the regulatory T-cells (Treg) to sites of inflammation. Required for the normal migration of Th17 cells in Peyers patches and other related tissue sites of the intestine and plays a role in regulating effector T-cell balance and distribution in inflamed intestine. Plays an important role in the coordination of early thymocyte precursor migration events important for normal subsequent thymocyte precursor development, but is not required for the formation of normal thymic natural regulatory T-cells (nTregs). Required for optimal differentiation of DN2 and DN3 thymocyte precursors. Essential for B-cell localization in the subepithelial dome of Peyers-patches and for efficient B-cell isotype switching to IgA in the Peyers-patches. Essential for appropriate anatomical distribution of memory B-cells in the spleen and for the secondary recall response of memory B-cells. Positively regulates sperm motility and chemotaxis via its binding to CCL20. In Mus musculus (Mouse), this protein is C-C chemokine receptor type 6 (Ccr6).